A 234-amino-acid polypeptide reads, in one-letter code: MAPVKISHVVSFSSQDPKYPVENLLNPDSPRRPWLGCPQDKSGQLKVELQLERAVPTGYIDVGNCGCAFLQIDVGHSSWPLDRPFITLLPATTLMSLTDSKQGKNRSGVRMFKDVDFLAPASGELWDRLRLTCSRPFTRHQSFGLAFLRVCSSLDSLDDSVVGPSALLSSVLNKIREFKTCFFSWSLKKMELEFSPLLLSINLNDLQFAADAEVSTVSNCMFISIALQSAMIIF.

This is Protein XNDC1N from Homo sapiens (Human).